Reading from the N-terminus, the 324-residue chain is Mevalonate-3-kinase (324 aa).

L19 is a binding site for substrate. 109–112 (SGSS) is an ATP binding site. Residues E145 and R149 each contribute to the substrate site. Residues R190 and S193 each contribute to the ATP site.

The protein belongs to the GHMP kinase family. Homodimer.

It catalyses the reaction (R)-mevalonate + ATP = (R)-3-phosphomevalonate + ADP + H(+). Its pathway is isoprenoid biosynthesis; isopentenyl diphosphate biosynthesis via mevalonate pathway. Catalyzes the phosphorylation of mevalonate (MVA) to yield mevalonate-3-phosphate. Functions in an alternative mevalonate pathway, which passes through mevalonate 3-phosphate rather than mevalonate 5-phosphate. Also able to catalyze the formation of isobutene via the conversion of 3-hydroxyisovalerate (3-HIV) to an unstable 3-phosphate intermediate that undergoes a spontaneous decarboxylation. The polypeptide is Mevalonate-3-kinase (Picrophilus torridus (strain ATCC 700027 / DSM 9790 / JCM 10055 / NBRC 100828 / KAW 2/3)).